We begin with the raw amino-acid sequence, 106 residues long: Insulin-like peptide 04 (106 aa).

The first 22 residues, 1–22 (MPRTFLVVLIYILAGFLCSTSA), serve as a signal peptide directing secretion. Residues 23–37 (LRKVNEASGIKTDGS) constitute a propeptide that is removed on maturation. Intrachain disulfides connect C45/C50, C46/C80, and C59/C68. A propeptide spans 86–106 (RRKRSLTVDKREAKKFIRQRR) (c peptide).

It belongs to the insulin family.

The protein localises to the secreted. Its function is as follows. Insulin decreases blood glucose concentration. May have evolved to activate insulin receptors (INSR) in vertebrates. Molecular docking studies reveals unique interaction with the human insulin receptor. In vivo, insulin-like peptide injection reduces blood glucose levels in two models of zebrafish diabetes (streptozotocin- and glucose-induced). Also shorter swimming distance of zebrafish larvae, an effect which is not observed with human insulin. The polypeptide is Insulin-like peptide 04 (Exaiptasia diaphana (Tropical sea anemone)).